We begin with the raw amino-acid sequence, 304 residues long: Methionyl-tRNA formyltransferase (304 aa).

111-114 (SLLP) contributes to the (6S)-5,6,7,8-tetrahydrofolate binding site.

This sequence belongs to the Fmt family.

The catalysed reaction is L-methionyl-tRNA(fMet) + (6R)-10-formyltetrahydrofolate = N-formyl-L-methionyl-tRNA(fMet) + (6S)-5,6,7,8-tetrahydrofolate + H(+). Attaches a formyl group to the free amino group of methionyl-tRNA(fMet). The formyl group appears to play a dual role in the initiator identity of N-formylmethionyl-tRNA by promoting its recognition by IF2 and preventing the misappropriation of this tRNA by the elongation apparatus. The polypeptide is Methionyl-tRNA formyltransferase (Campylobacter fetus subsp. fetus (strain 82-40)).